Here is a 158-residue protein sequence, read N- to C-terminus: uncharacterized protein (158 aa).

This is an uncharacterized protein from Caenorhabditis elegans.